Here is a 1006-residue protein sequence, read N- to C-terminus: Kinesin-like protein KIN-5C (1006 aa).

One can recognise a Kinesin motor domain in the interval 9-355; sequence NVQVLLRCRP…LDYAHRAKNI (347 aa). 95-102 is a binding site for ATP; sequence GQTGTGKT. A coiled-coil region spans residues 371–522; that stretch reads IKDLYGEIER…NASLFQKIAR (152 aa).

It belongs to the TRAFAC class myosin-kinesin ATPase superfamily. Kinesin family. KIN-5/BimC subfamily.

The protein resides in the cytoplasm. It is found in the cytoskeleton. It localises to the spindle. Its function is as follows. Responsible for microtubule translocation. May be important for the organization of phragmoplast-specific arrays of microtubules. Plays an essential role in stabilizing the mitotic spindle. Required during mitotic cytokinesis. This Nicotiana tabacum (Common tobacco) protein is Kinesin-like protein KIN-5C.